The chain runs to 1721 residues: Ras guanine nucleotide exchange factor R (1721 aa).

Positions 148–279 (QLEDEVDLVH…LQQQQQQQRS (132 aa)) form a coiled coil. Disordered stretches follow at residues 213–232 (QQQKHQEEKEKNDQKEKEEK), 445–515 (SSLG…NQQP), 551–701 (ATTT…VDKQ), 716–766 (RTPL…KSPS), 797–837 (TITI…TPNK), and 929–981 (DEVS…DPVS). Residues 216–232 (KHQEEKEKNDQKEKEEK) are compositionally biased toward basic and acidic residues. 4 stretches are compositionally biased toward low complexity: residues 454–469 (SPEKSISPSFTSSTSE), 479–493 (HNNNNNNYNNSSTNN), 501–515 (PSLSSNHSQQPNQQP), and 551–581 (ATTTTTTATSPSTSTSTSTSTSPNSSSLSIS). Residues 618 to 627 (NGTTSPRNNE) are compositionally biased toward polar residues. Low complexity-rich tracts occupy residues 628 to 651 (SSVTAATTTTTSTTASITTNVNTI) and 663 to 686 (TPTTGTPSTSTPTPQTPTSTSQND). A compositionally biased stretch (basic and acidic residues) spans 687–701 (KQNENNNKENFVDKQ). Composition is skewed to low complexity over residues 724 to 748 (SSNSSSPSNNSNTTNSSSHSSTNSS), 797 to 836 (TITINNNNNNNNNNNNNNNNNNNNIQQQQQQQQQIPTTPN), and 933 to 952 (ESSSSSSSSTTSPNNINTPS). The stretch at 802–831 (NNNNNNNNNNNNNNNNNNNIQQQQQQQQQI) forms a coiled coil. Over residues 968-978 (NLSSINNSSYD) the composition is skewed to polar residues. In terms of domain architecture, N-terminal Ras-GEF spans 1291–1411 (GRYVPKAGTL…ILGGLIKKKE (121 aa)). A Ras-GEF domain is found at 1447 to 1676 (NESEIARQLT…YQLSLIREPR (230 aa)).

In terms of processing, phosphorylated on threonine residues.

Promotes the exchange of Ras-bound GDP by GTP. May also play a role in the activation of rasG. In Dictyostelium discoideum (Social amoeba), this protein is Ras guanine nucleotide exchange factor R (gefR).